We begin with the raw amino-acid sequence, 218 residues long: Guanylate kinase (218 aa).

The region spanning 17–196 is the Guanylate kinase-like domain; that stretch reads GVLLALSSPS…ALEKLNEILH (180 aa). 24–31 lines the ATP pocket; sequence SPSGAGKT.

The protein belongs to the guanylate kinase family.

The protein localises to the cytoplasm. The enzyme catalyses GMP + ATP = GDP + ADP. Its function is as follows. Essential for recycling GMP and indirectly, cGMP. The protein is Guanylate kinase of Maricaulis maris (strain MCS10) (Caulobacter maris).